Consider the following 216-residue polypeptide: Probable transaldolase (216 aa).

Lysine 83 acts as the Schiff-base intermediate with substrate in catalysis.

Belongs to the transaldolase family. Type 3B subfamily.

The protein localises to the cytoplasm. It catalyses the reaction D-sedoheptulose 7-phosphate + D-glyceraldehyde 3-phosphate = D-erythrose 4-phosphate + beta-D-fructose 6-phosphate. It participates in carbohydrate degradation; pentose phosphate pathway; D-glyceraldehyde 3-phosphate and beta-D-fructose 6-phosphate from D-ribose 5-phosphate and D-xylulose 5-phosphate (non-oxidative stage): step 2/3. Functionally, transaldolase is important for the balance of metabolites in the pentose-phosphate pathway. The protein is Probable transaldolase of Methanococcus aeolicus (strain ATCC BAA-1280 / DSM 17508 / OCM 812 / Nankai-3).